A 656-amino-acid chain; its full sequence is UvrABC system protein B (656 aa).

One can recognise a Helicase ATP-binding domain in the interval 23–180; sequence EGIKKGYRFQ…QHLAKIGYER (158 aa). Residue 36–43 participates in ATP binding; that stretch reads GVTGSGKT. Residues 89–112 carry the Beta-hairpin motif; it reads YYDYYQPEAYVPTKDLYIEKNADI. Residues 426–588 enclose the Helicase C-terminal domain; that stretch reads QVDDLISEIK…ITPKTIVKPL (163 aa). One can recognise a UVR domain in the interval 614 to 649; it reads EEYLSLLEEEMYRAASELRYEDAAKLRDEIFRLREE.

Belongs to the UvrB family. In terms of assembly, forms a heterotetramer with UvrA during the search for lesions. Interacts with UvrC in an incision complex.

Its subcellular location is the cytoplasm. In terms of biological role, the UvrABC repair system catalyzes the recognition and processing of DNA lesions. A damage recognition complex composed of 2 UvrA and 2 UvrB subunits scans DNA for abnormalities. Upon binding of the UvrA(2)B(2) complex to a putative damaged site, the DNA wraps around one UvrB monomer. DNA wrap is dependent on ATP binding by UvrB and probably causes local melting of the DNA helix, facilitating insertion of UvrB beta-hairpin between the DNA strands. Then UvrB probes one DNA strand for the presence of a lesion. If a lesion is found the UvrA subunits dissociate and the UvrB-DNA preincision complex is formed. This complex is subsequently bound by UvrC and the second UvrB is released. If no lesion is found, the DNA wraps around the other UvrB subunit that will check the other stand for damage. The sequence is that of UvrABC system protein B from Pseudothermotoga lettingae (strain ATCC BAA-301 / DSM 14385 / NBRC 107922 / TMO) (Thermotoga lettingae).